Here is a 616-residue protein sequence, read N- to C-terminus: MSDLYIHELGDYLSDEFHGNDDGIVPDSAYEDGGQFPILVSNRKKRRNDDMGSGTNHLKSNTFIKREANMLGKNPWPEKDSGGSSVSRDTGTGKDVQDMTLEDTNTSDHGFNGGHVDVVENFSTGDPMLCDTSAATNDGVYNYSLNSIPDAENDLSFFDNGDKEKNDLFYGWGDIGNFEDVDNMLRSCDSTFGLDSLNNEGDLGWFSSAQPNEETAGAMTDDLKPDKMLENQRTAMLQVEDFLNNSEPNHAVEDEYGYTIEDDSAQGKSSQNVFDTSLQKKDILMLDVEANLEKKQTDHLHHLDGKSDGFSENSFTLQHSGISREIMDTNQYYPPSAFQQRDVPYSHFNCEQPSVQVSACESKSGIKSENKPSPSSASNESYTSNHAQSIESLQGPTVDDRFRKVFETRANLLPGQDMPPSFAANTKKSSKTDSMVFPDAAPIQKIGLENDHRKAATELETSNMQGSSCVSSVVDDISLEATSFRQLQQVIEQLDVRTKLCIRDSLYRLAKSAEQRHHGGNRPEKGAGSHLVTGEADKYAGFMDIETDTNPIDRSIAHLLFHRPSDSSLSSDNNVLSYKSHPMIPQPNSSPSLRIEKQEETTELRPEAEVVTSDNN.

Disordered stretches follow at residues 72 to 112 (GKNP…HGFN), 361 to 398 (ESKSGIKSENKPSPSSASNESYTSNHAQSIESLQGPTV), 410 to 434 (ANLLPGQDMPPSFAANTKKSSKTDS), and 567 to 616 (SSLS…SDNN). Over residues 371–395 (KPSPSSASNESYTSNHAQSIESLQG) the composition is skewed to polar residues. Low complexity predominate over residues 567-577 (SSLSSDNNVLS). Residues 594–608 (RIEKQEETTELRPEA) show a composition bias toward basic and acidic residues.

Interacts with CCA1, LHY, REV4 and REV8, but not with PRR7 or PRR9. As to expression, expressed in roots, stems, leaves, seedlings, cotyledons, inflorescences and siliques. Highest expression in root tips, young leaves and vasculatur tissues.

Its subcellular location is the nucleus. In terms of biological role, transcriptional coactivator necessary for expression of the clock genes PRR5 and TOC1. Antagonizes REV8 function in the regulation of anthocyanin accumulation. Involved in red light input to the clock. Activates clock-controlled genes with afternoon peak. Mediates light inhibition of hypocotyl elongation. The sequence is that of Protein LNK1 from Arabidopsis thaliana (Mouse-ear cress).